The sequence spans 71 residues: ATP synthase F(0) complex subunit e, mitochondrial (71 aa).

Lys34 bears the N6-acetyllysine mark. Ser68 bears the Phosphoserine mark.

Belongs to the ATPase e subunit family. As to quaternary structure, component of the ATP synthase complex composed at least of ATP5F1A/subunit alpha, ATP5F1B/subunit beta, ATP5MC1/subunit c (homooctomer), MT-ATP6/subunit a, MT-ATP8/subunit 8, ATP5ME/subunit e, ATP5MF/subunit f, ATP5MG/subunit g, ATP5MK/subunit k, ATP5MJ/subunit j, ATP5F1C/subunit gamma, ATP5F1D/subunit delta, ATP5F1E/subunit epsilon, ATP5PF/subunit F6, ATP5PB/subunit b, ATP5PD/subunit d, ATP5PO/subunit OSCP. ATP synthase complex consists of a soluble F(1) head domain (subunits alpha(3) and beta(3)) - the catalytic core - and a membrane F(0) domain - the membrane proton channel (subunits c, a, 8, e, f, g, k and j). These two domains are linked by a central stalk (subunits gamma, delta, and epsilon) rotating inside the F1 region and a stationary peripheral stalk (subunits F6, b, d, and OSCP). In terms of tissue distribution, mammary gland, liver, kidney, heart, spleen, brain and lung.

The protein resides in the mitochondrion. Its subcellular location is the mitochondrion inner membrane. In terms of biological role, subunit e, of the mitochondrial membrane ATP synthase complex (F(1)F(0) ATP synthase or Complex V) that produces ATP from ADP in the presence of a proton gradient across the membrane which is generated by electron transport complexes of the respiratory chain. ATP synthase complex consist of a soluble F(1) head domain - the catalytic core - and a membrane F(1) domain - the membrane proton channel. These two domains are linked by a central stalk rotating inside the F(1) region and a stationary peripheral stalk. During catalysis, ATP synthesis in the catalytic domain of F(1) is coupled via a rotary mechanism of the central stalk subunits to proton translocation. In vivo, can only synthesize ATP although its ATP hydrolase activity can be activated artificially in vitro. Part of the complex F(0) domain. The sequence is that of ATP synthase F(0) complex subunit e, mitochondrial from Mus musculus (Mouse).